A 177-amino-acid chain; its full sequence is Putative peroxiredoxin (177 aa).

Residues 8-177 (TAKGNEIPDT…ASIDTILTKV (170 aa)) form the Thioredoxin domain. C64 serves as the catalytic Cysteine sulfenic acid (-SOH) intermediate. A Microbody targeting signal motif is present at residues 175 to 177 (TKV).

This sequence belongs to the peroxiredoxin family. Prx5 subfamily. As to quaternary structure, homodimer; disulfide-linked, upon oxidation.

It catalyses the reaction a hydroperoxide + [thioredoxin]-dithiol = an alcohol + [thioredoxin]-disulfide + H2O. Thiol-specific peroxidase that catalyzes the reduction of hydrogen peroxide and organic hydroperoxides to water and alcohols, respectively. Plays a role in cell protection against oxidative stress by detoxifying peroxides and as sensor of hydrogen peroxide-mediated signaling events. The chain is Putative peroxiredoxin from Malassezia furfur (Pityriasis versicolor infection agent).